A 730-amino-acid chain; its full sequence is Ribosomal RNA large subunit methyltransferase K/L (730 aa).

The THUMP domain maps to 46 to 157 (TAYRLCVWSR…RGEAILSLDL (112 aa)). The disordered stretch occupies residues 395–418 (ERREAQPEGTEVRQQAPQASEPAR).

The protein belongs to the methyltransferase superfamily. RlmKL family.

The protein localises to the cytoplasm. The enzyme catalyses guanosine(2445) in 23S rRNA + S-adenosyl-L-methionine = N(2)-methylguanosine(2445) in 23S rRNA + S-adenosyl-L-homocysteine + H(+). The catalysed reaction is guanosine(2069) in 23S rRNA + S-adenosyl-L-methionine = N(2)-methylguanosine(2069) in 23S rRNA + S-adenosyl-L-homocysteine + H(+). Its function is as follows. Specifically methylates the guanine in position 2445 (m2G2445) and the guanine in position 2069 (m7G2069) of 23S rRNA. The sequence is that of Ribosomal RNA large subunit methyltransferase K/L from Pseudomonas putida (strain GB-1).